A 341-amino-acid chain; its full sequence is Glycerol-3-phosphate dehydrogenase [NAD(P)+] (341 aa).

Residues Ser-11, Trp-12, Arg-32, and Lys-106 each contribute to the NADPH site. Residues Lys-106, Gly-137, and Thr-139 each coordinate sn-glycerol 3-phosphate. Ala-141 is an NADPH binding site. The sn-glycerol 3-phosphate site is built by Lys-192, Asp-245, Ser-255, Arg-256, and Asn-257. Lys-192 serves as the catalytic Proton acceptor. Arg-256 serves as a coordination point for NADPH. Residues Val-280 and Glu-282 each contribute to the NADPH site.

It belongs to the NAD-dependent glycerol-3-phosphate dehydrogenase family.

The protein resides in the cytoplasm. The catalysed reaction is sn-glycerol 3-phosphate + NAD(+) = dihydroxyacetone phosphate + NADH + H(+). It catalyses the reaction sn-glycerol 3-phosphate + NADP(+) = dihydroxyacetone phosphate + NADPH + H(+). It functions in the pathway membrane lipid metabolism; glycerophospholipid metabolism. Its function is as follows. Catalyzes the reduction of the glycolytic intermediate dihydroxyacetone phosphate (DHAP) to sn-glycerol 3-phosphate (G3P), the key precursor for phospholipid synthesis. This Exiguobacterium sp. (strain ATCC BAA-1283 / AT1b) protein is Glycerol-3-phosphate dehydrogenase [NAD(P)+].